A 4588-amino-acid polypeptide reads, in one-letter code: Protocadherin Fat 1 (4588 aa).

An N-terminal signal peptide occupies residues 1–21; it reads MGRHLALLLLLLLLFQHFGDS. The Extracellular portion of the chain corresponds to 22–4181; sequence DGSQRLEQTP…STPWNIGLAE (4160 aa). 2 Cadherin domains span residues 35–149 and 150–257; these read THLE…RPLF and SPTS…APVI. Asn40 is a glycosylation site (N-linked (GlcNAc...) asparagine). Residue Asn333 is glycosylated (N-linked (GlcNAc...) asparagine). 31 consecutive Cadherin domains span residues 368–463, 464–569, 570–673, 718–822, 823–927, 928–1034, 1035–1139, 1140–1245, 1246–1357, 1359–1456, 1457–1562, 1563–1667, 1668–1765, 1766–1879, 1880–1979, 1980–2081, 2082–2182, 2183–2283, 2284–2390, 2391–2492, 2493–2596, 2597–2703, 2704–2809, 2810–2918, 2919–3023, 3024–3125, 3126–3230, 3231–3335, 3336–3440, 3441–3545, and 3546–3647; these read EKDV…PPEF, TQTA…TPLF, EKIN…VNLQ, STLP…PPEF, LQES…PPTF, IPPN…PPVF, SSFV…APQT, SEPV…KPQF, LQKF…EPIS, EESF…RPQF, STSK…APWF, TASS…SPKF, TSKE…APVF, MQAE…PPVF, AKPL…HLKF, TQDV…APVF, VNLP…MPVF, EKPF…PPVF, AQQS…PPLF, EQQI…SPAF, LQNE…APQF, RATK…LPKF, SEPF…SPVF, ESSP…PPRF, TAEI…SPVC, EKTL…APEF, SADP…PPVF, EYRE…TPVF, SQDT…APVF, SRGN…PPAI, and LPLE…AIRF. Asn660, Asn740, and Asn791 each carry an N-linked (GlcNAc...) asparagine glycan. N-linked (GlcNAc...) asparagine glycosylation is present at Asn998. N-linked (GlcNAc...) asparagine glycans are attached at residues Asn1426 and Asn1551. N-linked (GlcNAc...) asparagine glycans are attached at residues Asn1748, Asn1864, Asn1902, Asn1940, and Asn1991. N-linked (GlcNAc...) asparagine glycosylation is found at Asn2325 and Asn2464. Asn3324, Asn3422, Asn3444, Asn3613, Asn3640, and Asn3716 each carry an N-linked (GlcNAc...) asparagine glycan. The 38-residue stretch at 3790 to 3827 folds into the EGF-like 1 domain; the sequence is VHHGCEDDPCPEGSECVSDPWEEKHTCVCPSGRFGQCP. Disulfide bonds link Cys3794/Cys3805, Cys3799/Cys3816, Cys3818/Cys3826, Cys3976/Cys4009, Cys4017/Cys4028, Cys4022/Cys4038, Cys4040/Cys4049, Cys4056/Cys4067, Cys4061/Cys4076, Cys4078/Cys4087, Cys4093/Cys4104, Cys4098/Cys4113, Cys4115/Cys4124, Cys4131/Cys4142, and Cys4136/Cys4151. The region spanning 3829–4009 is the Laminin G-like domain; it reads SSSMTLTGNS…EESVDVSPGC (181 aa). 3 consecutive EGF-like domains span residues 4013 to 4050, 4052 to 4088, and 4089 to 4125; these read ATED…THCE, SVNP…QRCQ, and LSPY…ERCQ. One can recognise an EGF-like 5; calcium-binding domain in the interval 4127-4163; sequence DIDECSGNPCLHGALCENTHGSYHCNCSHEYRGRHCE. N-linked (GlcNAc...) asparagine glycosylation occurs at Asn4152. Residues Cys4153 and Cys4162 are joined by a disulfide bond. Residues 4182–4202 form a helical membrane-spanning segment; that stretch reads GIGIVVFVAGIFLLVVVFVLC. Residues 4203–4588 are Cytoplasmic-facing; it reads RKMISRKKKH…PLDSQQHTEV (386 aa). A Nuclear localization signal motif is present at residues 4204 to 4214; it reads KMISRKKKHQA. 3 disordered regions span residues 4255–4275, 4303–4327, and 4343–4376; these read SYTP…SFEG, SVAP…QKPS, and LSKK…SESC. Over residues 4256-4265 the composition is skewed to polar residues; it reads YTPSIPSDSR. The span at 4363 to 4374 shows a compositional bias: polar residues; sequence SEVQSLSSFQSE. Residues 4378–4382 carry the PTB-like motif motif; sequence DNGYH. Disordered regions lie at residues 4435-4479 and 4565-4588; these read FPPP…SSSR and ESGD…HTEV.

Interacts (via the C-terminus 4300-4400 AA) with ATN1. Interacts with RERE. In terms of processing, undergoes proteolytic cleavage. The extracellular domain is cleaved off and the cytoplasmic domain (about 400 AA) shuttles to the nucleus. Expressed in many epithelial and some endothelial and smooth muscle cells.

It is found in the cell membrane. The protein resides in the nucleus. Plays an essential role for cellular polarization, directed cell migration and modulating cell-cell contact. This Homo sapiens (Human) protein is Protocadherin Fat 1 (FAT1).